Here is a 744-residue protein sequence, read N- to C-terminus: Cullin-1 (744 aa).

In terms of domain architecture, Cullin neddylation spans D674–N736.

It belongs to the cullin family. As to quaternary structure, part of a SCF (SKP1-CUL1-F-box protein) E3 ubiquitin-protein ligase complex. Is able to form the SCF complex together with SKP1 and the rice black streaked dwarf virus RBSDV protein P7-2. Interacts with D3. Post-translationally, neddylated (rubylated). Deneddylation occurs upon interaction with the COP9 signalosome (CSN) complex. In terms of tissue distribution, expressed in dry seeds and coleoptiles.

Its function is as follows. Involved in ubiquitination and subsequent proteasomal degradation of target proteins. This is Cullin-1 from Oryza sativa subsp. japonica (Rice).